Consider the following 314-residue polypeptide: MNTYVAEIGEIVRSQRRDEEYIEDITERLSRVSKELLGQRTWIRWFPYLKSIASTLYYTSTVVLGNQTLGEEYVHLFESNGLERTVPSIPSRISFVLLHSAFPLISNYLIQKAESTLTHPSTESFLGIPIRKNQKARQSFLDVFFWLRTKLFPQLQRAHIALFYITGAYYSIARRFTGIRFLSASAHSDIPALKVYRFLGYITLIQLAVSIGISLYSFLEQEKFNNKLKKEKKENNGGSDRNLDENSLFHPTFQCSICLENKNPSALFCGHLFCWTCIQEHAVAATSSASTSSARCPQCRLEFQPRDVTPLLNL.

The Peroxisomal matrix portion of the chain corresponds to 1-7 (MNTYVAE). Residues 8–37 (IGEIVRSQRRDEEYIEDITERLSRVSKELL) traverse the membrane as a helical segment. Position 38 (glycine 38) is a topological domain, cytoplasmic. Residues 39–60 (QRTWIRWFPYLKSIASTLYYTS) form a helical membrane-spanning segment. Residues 61–90 (TVVLGNQTLGEEYVHLFESNGLERTVPSIP) lie on the Peroxisomal matrix side of the membrane. Residues 91–110 (SRISFVLLHSAFPLISNYLI) form a helical membrane-spanning segment. Residues 111–142 (QKAESTLTHPSTESFLGIPIRKNQKARQSFLD) lie on the Cytoplasmic side of the membrane. A helical membrane pass occupies residues 143–166 (VFFWLRTKLFPQLQRAHIALFYIT). Over 167 to 197 (GAYYSIARRFTGIRFLSASAHSDIPALKVYR) the chain is Peroxisomal matrix. A helical membrane pass occupies residues 198–218 (FLGYITLIQLAVSIGISLYSF). At 219–314 (LEQEKFNNKL…PRDVTPLLNL (96 aa)) the chain is on the cytoplasmic side. Residues cysteine 255, cysteine 258, cysteine 269, histidine 271, cysteine 274, cysteine 277, cysteine 296, and cysteine 299 each contribute to the Zn(2+) site. An RING-type zinc finger spans residues 255-300 (CSICLENKNPSALFCGHLFCWTCIQEHAVAATSSASTSSARCPQCR).

Belongs to the pex2/pex10/pex12 family. As to quaternary structure, component of the PEX2-PEX10-PEX12 retrotranslocation channel.

It localises to the peroxisome membrane. The enzyme catalyses S-ubiquitinyl-[E2 ubiquitin-conjugating enzyme]-L-cysteine + [acceptor protein]-L-lysine = [E2 ubiquitin-conjugating enzyme]-L-cysteine + N(6)-ubiquitinyl-[acceptor protein]-L-lysine.. Its pathway is protein modification; protein ubiquitination. Its activity is regulated as follows. The E3 ubiquitin-protein ligase activity is stimulated by PEX12/prx-12. In terms of biological role, E3 ubiquitin-protein ligase component of a retrotranslocation channel required for peroxisome organization by mediating export of the PEX5/prx-5 receptor from peroxisomes to the cytosol, thereby promoting PEX5/prx-5 recycling. The retrotranslocation channel is composed of PEX2/prx-2, PEX10/prx-10 and PEX12/prx-12; each subunit contributing transmembrane segments that coassemble into an open channel that specifically allows the passage of PEX5/prx-5 through the peroxisomal membrane. PEX10/prx-10 also regulates PEX5 recycling by acting as a E3 ubiquitin-protein ligase. When PEX5/prx-5 recycling is compromised, PEX10/prx-10 catalyzes polyubiquitination of PEX5/prx-5 during its passage through the retrotranslocation channel, leading to its degradation. The protein is Peroxisome biogenesis factor 10 of Caenorhabditis elegans.